A 129-amino-acid polypeptide reads, in one-letter code: Putative F-box protein At3g42722 (129 aa).

Residues Met4–Asn50 enclose the F-box domain.

The polypeptide is Putative F-box protein At3g42722 (Arabidopsis thaliana (Mouse-ear cress)).